A 398-amino-acid chain; its full sequence is Keratinocyte differentiation factor 1 (398 aa).

2 disordered regions span residues 1–60 and 123–156; these read MPRP…SITF and AEANWAKEHNGVPPSPDRAPPSRRDGQRLKSTMG. A compositionally biased stretch (basic and acidic residues) spans 44–55; it reads RPDPKDPGHHGP. S218 is modified (phosphoserine). 2 disordered regions span residues 307-340 and 369-392; these read RKSRARPQTSEGRSTRAAAPTAAAPDSGHETMVG and GAPGYPASHDSSFQGTDTDSSGAP. Residues 377–389 are compositionally biased toward polar residues; sequence HDSSFQGTDTDSS.

The protein resides in the cytoplasm. Its subcellular location is the cell junction. Its function is as follows. Plays a role in the regulation of the epidermis formation during early development. Required both as an inhibitor of basal cell proliferation and a promoter of differentiation of basal progenitor cell progeny. The polypeptide is Keratinocyte differentiation factor 1 (KDF1) (Homo sapiens (Human)).